Consider the following 378-residue polypeptide: Lipoyl synthase, mitochondrial (378 aa).

Residues Cys97, Cys102, Cys108, Cys128, Cys132, Cys135, and Ser343 each contribute to the [4Fe-4S] cluster site. A Radical SAM core domain is found at 111–332; that stretch reads GSDKSAATAT…RQRALDMGFL (222 aa).

The protein belongs to the radical SAM superfamily. Lipoyl synthase family. The cofactor is [4Fe-4S] cluster.

The protein resides in the mitochondrion. It carries out the reaction [[Fe-S] cluster scaffold protein carrying a second [4Fe-4S](2+) cluster] + N(6)-octanoyl-L-lysyl-[protein] + 2 oxidized [2Fe-2S]-[ferredoxin] + 2 S-adenosyl-L-methionine + 4 H(+) = [[Fe-S] cluster scaffold protein] + N(6)-[(R)-dihydrolipoyl]-L-lysyl-[protein] + 4 Fe(3+) + 2 hydrogen sulfide + 2 5'-deoxyadenosine + 2 L-methionine + 2 reduced [2Fe-2S]-[ferredoxin]. It functions in the pathway protein modification; protein lipoylation via endogenous pathway; protein N(6)-(lipoyl)lysine from octanoyl-[acyl-carrier-protein]: step 2/2. Its function is as follows. Catalyzes the radical-mediated insertion of two sulfur atoms into the C-6 and C-8 positions of the octanoyl moiety bound to the lipoyl domains of lipoate-dependent enzymes, thereby converting the octanoylated domains into lipoylated derivatives. This Phaeosphaeria nodorum (strain SN15 / ATCC MYA-4574 / FGSC 10173) (Glume blotch fungus) protein is Lipoyl synthase, mitochondrial.